The following is a 188-amino-acid chain: MAKLENPILMAKIGGAQGLRGEVRVSTYTDDPMALGDYGNLVTADGRVFEILEVREGKNVVVVRFRGINDRNAAESLNGLELFIERDNLPDDELDDDEFYYADLEGLEAVDAEGKSYGAVSAVYDFGAGDLLELKGAGRRPALIPFSEAAVLEIDLEAGRILIDPMAAGLIDNPDDKDQNGMSPFGKK.

Positions Asp-96–Gly-169 constitute a PRC barrel domain.

Belongs to the RimM family. In terms of assembly, binds ribosomal protein uS19.

Its subcellular location is the cytoplasm. Its function is as follows. An accessory protein needed during the final step in the assembly of 30S ribosomal subunit, possibly for assembly of the head region. Essential for efficient processing of 16S rRNA. May be needed both before and after RbfA during the maturation of 16S rRNA. It has affinity for free ribosomal 30S subunits but not for 70S ribosomes. This is Ribosome maturation factor RimM from Agrobacterium fabrum (strain C58 / ATCC 33970) (Agrobacterium tumefaciens (strain C58)).